The primary structure comprises 959 residues: Alanine--tRNA ligase (959 aa).

The residue at position 389 (S389) is a Phosphoserine. The Zn(2+) site is built by H606, H610, C725, and H729.

It belongs to the class-II aminoacyl-tRNA synthetase family. Monomer. Zn(2+) is required as a cofactor.

The protein resides in the mitochondrion. The protein localises to the cytoplasm. It catalyses the reaction tRNA(Ala) + L-alanine + ATP = L-alanyl-tRNA(Ala) + AMP + diphosphate. Catalyzes the attachment of alanine to tRNA(Ala) in a two-step reaction: alanine is first activated by ATP to form Ala-AMP and then transferred to the acceptor end of tRNA(Ala). Also edits incorrectly charged tRNA(Ala) via its editing domain. This is Alanine--tRNA ligase (ala1) from Schizosaccharomyces pombe (strain 972 / ATCC 24843) (Fission yeast).